The chain runs to 127 residues: DNA-directed RNA polymerases I, II, and III subunit RPABC2 (127 aa).

A compositionally biased stretch (acidic residues) spans 1–34; the sequence is MSDNEDNFDGDDFDDVEEDEGLDDLENAEEEGQE. Residues 1 to 53 are disordered; sequence MSDNEDNFDGDDFDDVEEDEGLDDLENAEEEGQENVEILPSGERPQANQKRIT. The residue at position 2 (Ser-2) is an N-acetylserine. Ser-2 carries the phosphoserine; by CK2 modification.

Belongs to the archaeal Rpo6/eukaryotic RPB6 RNA polymerase subunit family. As to quaternary structure, component of the RNA polymerase I (Pol I), RNA polymerase II (Pol II) and RNA polymerase III (Pol III) complexes consisting of at least 13, 12 and 17 subunits, respectively. Pol I complex consists of a ten-subunit catalytic core composed of POLR1A/RPA1, POLR1B/RPA2, POLR1C/RPAC1, POLR1D/RPAC2, POLR1H/RPA12, POLR2E/RPABC1, POLR2F/RPABC2, POLR2H/RPABC3, POLR2K/RPABC4 and POLR2L/RPABC5; a mobile stalk subunit POLR1F/RPA43 protruding from the core and additional subunits homologous to general transcription factors POLR1E/RPA49 and POLR1G/RPA34. Part of Pol I pre-initiation complex (PIC), in which Pol I core assembles with RRN3 and promoter-bound UTBF and SL1/TIF-IB complex. Pol II complex contains a ten-subunit catalytic core composed of POLR2A/RPB1, POLR2B/RPB2, POLR2C/RPB3, POLR2I/RPB9, POLR2J/RPB11, POLR2E/RPABC1, POLR2F/RPABC2, POLR2H/RPABC3, POLR2K/RPABC4 and POLR2L/RPABC5 and a mobile stalk composed of two subunits POLR2D/RPB4 and POLR2G/RPB7. Part of Pol II(G) complex, in which Pol II core associates with an additional subunit POLR2M; unlike conventional Pol II, Pol II(G) functions as a transcriptional repressor. Part of TBP-based Pol II pre-initiation complex (PIC), in which Pol II core assembles with general transcription factors and other specific initiation factors including GTF2E1, GTF2E2, GTF2F1, GTF2F2, TCEA1, ERCC2, ERCC3, GTF2H2, GTF2H3, GTF2H4, GTF2H5, GTF2A1, GTF2A2, GTF2B and TBP; this large multi-subunit PIC complex mediates DNA unwinding and targets Pol II core to the transcription start site where the first phosphodiester bond forms. Pol III complex consists of a ten-subunit catalytic core composed of POLR3A/RPC1, POLR3B/RPC2, POLR1C/RPAC1, POLR1D/RPAC2, POLR3K/RPC10, POLR2E/RPABC1, POLR2F/RPABC2, POLR2H/RPABC3, POLR2K/RPABC4 and POLR2L/RPABC5; a mobile stalk composed of two subunits POLR3H/RPC8 and CRCP/RPC9, protruding from the core and functioning primarily in transcription initiation; and additional subunits homologous to general transcription factors of the RNA polymerase II machinery, POLR3C/RPC3-POLR3F/RPC6-POLR3G/RPC7 heterotrimer required for transcription initiation and POLR3D/RPC4-POLR3E/RPC5 heterodimer involved in both transcription initiation and termination.

It is found in the nucleus. It localises to the nucleolus. DNA-dependent RNA polymerase catalyzes the transcription of DNA into RNA using the four ribonucleoside triphosphates as substrates. Common component of RNA polymerases I, II, and III which synthesize ribosomal RNA precursors, mRNA precursors and many functional non-coding RNAs, and small RNAs, such as 5S rRNA and tRNAs, respectively. Pol II is the central component of the basal RNA polymerase II transcription machinery. Pols are composed of mobile elements that move relative to each other. In Pol II, POLR2F/RPABC2 is part of the clamp element and together with parts of POLR2A/RPB1 and POLR2B/RPB2 forms a pocket to which the POLR2D/RPB4-POLR2G/RPB7 subcomplex binds. This Mus musculus (Mouse) protein is DNA-directed RNA polymerases I, II, and III subunit RPABC2.